The primary structure comprises 674 residues: Methionine--tRNA ligase (674 aa).

Positions 12 to 22 match the 'HIGH' region motif; sequence PYANGPIHLGH. Residues cysteine 143, cysteine 146, cysteine 156, and cysteine 159 each coordinate Zn(2+). Positions 328–332 match the 'KMSKS' region motif; sequence KMSKS. Position 331 (lysine 331) interacts with ATP. A tRNA-binding domain is found at 573–674; sequence SFAKLDLRIA…EGARPGMRVK (102 aa).

Belongs to the class-I aminoacyl-tRNA synthetase family. MetG type 1 subfamily. In terms of assembly, homodimer. Zn(2+) is required as a cofactor.

Its subcellular location is the cytoplasm. The enzyme catalyses tRNA(Met) + L-methionine + ATP = L-methionyl-tRNA(Met) + AMP + diphosphate. Functionally, is required not only for elongation of protein synthesis but also for the initiation of all mRNA translation through initiator tRNA(fMet) aminoacylation. The sequence is that of Methionine--tRNA ligase from Nitrosococcus oceani (strain ATCC 19707 / BCRC 17464 / JCM 30415 / NCIMB 11848 / C-107).